Reading from the N-terminus, the 59-residue chain is Large ribosomal subunit protein uL30 (59 aa).

This sequence belongs to the universal ribosomal protein uL30 family. Part of the 50S ribosomal subunit.

This is Large ribosomal subunit protein uL30 from Alkaliphilus oremlandii (strain OhILAs) (Clostridium oremlandii (strain OhILAs)).